Reading from the N-terminus, the 480-residue chain is MKVLSVSSEVFPLIKTGGLADVSGALPIALKAFGVETKTLLPGYPAVMKVIRDPVVRLEFPDLLGERATVLEVDHEGLDLLVLDAPAYYDRPGGPYLDPLGKDYPDNWRRFAALSLAASEIGAGLLPGWRPDLVHTHDWQAALTSVYMRYYPTPELPSVLTIHNIAFQGQFGSEIFPGLRLPDHAFAIDGVEYYGTTGFLKGGLQTAHAITTVSPTYADEILTPEFGMGLEGVIATRIDDLHGIVNGIDTDVWNPATDPVVHTHYGPTTLKNREENRRSIAEFFHLDNDDAPIFCVISRLTWQKGMDIVANVADRIVAMGGKLVVLGSGEAALEGALLASASRNPGRIGVSIGYNEPMSHLMQAGCDAIIIPSRFEPCGLTQLYALRYGCVPIVARTGGLNDTVIDANHAALAAKVATGIQFSPVTETGMLQAIRRAMHFYADRKLWTQLQKQGMKSDVSWEKSAERYAALYSSLVSKGM.

Belongs to the glycosyltransferase 1 family. Bacterial/plant glycogen synthase subfamily.

It carries out the reaction [(1-&gt;4)-alpha-D-glucosyl](n) + ADP-alpha-D-glucose = [(1-&gt;4)-alpha-D-glucosyl](n+1) + ADP + H(+). It functions in the pathway glycan biosynthesis; glycogen biosynthesis. Its function is as follows. Synthesizes alpha-1,4-glucan chains using ADP-glucose. The chain is Glycogen synthase from Rhizobium etli (strain ATCC 51251 / DSM 11541 / JCM 21823 / NBRC 15573 / CFN 42).